Here is an 89-residue protein sequence, read N- to C-terminus: Large ribosomal subunit protein bL31B (89 aa).

It belongs to the bacterial ribosomal protein bL31 family. Type B subfamily. Part of the 50S ribosomal subunit.

This Actinobacillus pleuropneumoniae serotype 5b (strain L20) protein is Large ribosomal subunit protein bL31B.